A 234-amino-acid chain; its full sequence is Uridylate kinase (234 aa).

9-12 (KLSG) provides a ligand contact to ATP. Residue Gly-51 coordinates UMP. Residues Gly-52 and Arg-56 each coordinate ATP. Residues Asp-71 and 132-139 (CGNPFFTT) each bind UMP. ATP-binding residues include Thr-159, Tyr-165, and Asp-168.

Belongs to the UMP kinase family. As to quaternary structure, homohexamer.

The protein localises to the cytoplasm. The catalysed reaction is UMP + ATP = UDP + ADP. It functions in the pathway pyrimidine metabolism; CTP biosynthesis via de novo pathway; UDP from UMP (UMPK route): step 1/1. With respect to regulation, inhibited by UTP. Its function is as follows. Catalyzes the reversible phosphorylation of UMP to UDP. The sequence is that of Uridylate kinase from Prochlorococcus marinus (strain MIT 9215).